The chain runs to 122 residues: Selenoprotein H (122 aa).

Position 20 is an N6-acetyllysine (Lys20). A cross-link (cysteinyl-selenocysteine (Cys-Sec); redox-active) is located at residues 41 to 44; the sequence is CTSU. A non-standard amino acid (selenocysteine) is located at residue Sec44.

It belongs to the SelWTH family.

May be involved in a redox-related process. The sequence is that of Selenoprotein H from Homo sapiens (Human).